Consider the following 176-residue polypeptide: Large ribosomal subunit protein eL20 (176 aa).

Lys11 participates in a covalent cross-link: Glycyl lysine isopeptide (Lys-Gly) (interchain with G-Cter in SUMO2). Tyr63 carries the post-translational modification Phosphotyrosine. At Ser71 the chain carries Phosphoserine. Residue Lys76 is modified to N6-succinyllysine. Ser123 carries the post-translational modification Phosphoserine. Glycyl lysine isopeptide (Lys-Gly) (interchain with G-Cter in SUMO2) cross-links involve residues Lys128 and Lys170.

This sequence belongs to the eukaryotic ribosomal protein eL20 family. In terms of assembly, component of the large ribosomal subunit. Binds IPO9 with high affinity.

It localises to the cytoplasm. Component of the large ribosomal subunit. The ribosome is a large ribonucleoprotein complex responsible for the synthesis of proteins in the cell. The sequence is that of Large ribosomal subunit protein eL20 (RPL18A) from Bos taurus (Bovine).